A 1009-amino-acid chain; its full sequence is Protein WBSCR14 homolog (1009 aa).

4 disordered regions span residues 1–20 (MSRG…PHDD), 304–354 (MSLG…LHQM), 488–531 (NNQP…DPMM), and 686–728 (ILES…EQEA). 2 stretches are compositionally biased toward polar residues: residues 324–350 (RTPT…SSAS) and 499–508 (RSNLLPTQND). Positions 511–526 (LPQFLQSTQPTPQPQS) are enriched in low complexity. Residues 686–695 (ILESPSTSGD) are compositionally biased toward polar residues. Residues 803 to 856 (RKRILHLHAEQNRRSALKDGFDQLMDIIPDLYSGGVKPTNAVVLAKSADHIRRL) form the bHLH domain. The segment at 856-877 (LQAEKWDKTQKIDEAKAKIEKL) is leucine-zipper.

In terms of tissue distribution, expressed in intestine, neurons, muscle, hypodermis, excretory cell and other tissues.

Its subcellular location is the nucleus. It is found in the cytoplasm. It localises to the mitochondrion. In terms of biological role, transcription factor that binds to the E box motif 5'-CACGTG-3', probably in a heterodimeric complex with mxl-2. Involved in modulating longevity in response to TOR signaling, dietary restriction, the decline in protein homeostasis associated with normal aging, germline signaling and the insulin-like signaling pathway. Plays a role in autophagy. Involved in regulating migration of the ray 1 precursor cells in the male tail, acting in concert with Wnt and semaphorin signaling pathways. Regulates transcription of genes encoding extracellular matrix (ECM) components which may contribute to the substratum required for migration of the neighboring ray 1 precursor cells. Involved in repressing infection by the microsporidian pathogen N.parisii, probably acting independently of its canonical partner, mxl-2. The polypeptide is Protein WBSCR14 homolog (mml-1) (Caenorhabditis elegans).